A 222-amino-acid polypeptide reads, in one-letter code: Eukaryotic translation initiation factor 3 subunit K (222 aa).

Residues 46–208 (YDLEANLAVL…KIKTKNITEK (163 aa)) form the PCI domain.

It belongs to the eIF-3 subunit K family. Component of the eukaryotic translation initiation factor 3 (eIF-3) complex. The eIF-3 complex interacts with pix.

It is found in the cytoplasm. Component of the eukaryotic translation initiation factor 3 (eIF-3) complex, which is involved in protein synthesis of a specialized repertoire of mRNAs and, together with other initiation factors, stimulates binding of mRNA and methionyl-tRNAi to the 40S ribosome. The eIF-3 complex specifically targets and initiates translation of a subset of mRNAs involved in cell proliferation. This chain is Eukaryotic translation initiation factor 3 subunit K, found in Drosophila grimshawi (Hawaiian fruit fly).